The sequence spans 609 residues: UvrABC system protein C (609 aa).

The GIY-YIG domain occupies 15–92; it reads TGSGVYQIQD…IKQFRPRYNV (78 aa). Residues 202-237 enclose the UVR domain; that stretch reads DQVIIKLTERMEVASENLVFEEAAHYRDQIRQLRRL.

This sequence belongs to the UvrC family. In terms of assembly, interacts with UvrB in an incision complex.

It localises to the cytoplasm. Its function is as follows. The UvrABC repair system catalyzes the recognition and processing of DNA lesions. UvrC both incises the 5' and 3' sides of the lesion. The N-terminal half is responsible for the 3' incision and the C-terminal half is responsible for the 5' incision. The chain is UvrABC system protein C from Coxiella burnetii (strain Dugway 5J108-111).